The following is a 677-amino-acid chain: DNA ligase (677 aa).

NAD(+)-binding positions include 38 to 42 (DSVYD), 87 to 88 (SL), and Glu119. Lys121 serves as the catalytic N6-AMP-lysine intermediate. NAD(+)-binding residues include Arg142, Glu179, Lys296, and Lys320. The Zn(2+) site is built by Cys414, Cys417, Cys432, and Cys438. In terms of domain architecture, BRCT spans 595–677 (VVKSEIAGKT…LKLLKSKGVF (83 aa)).

The protein belongs to the NAD-dependent DNA ligase family. LigA subfamily. The cofactor is Mg(2+). Mn(2+) is required as a cofactor.

It catalyses the reaction NAD(+) + (deoxyribonucleotide)n-3'-hydroxyl + 5'-phospho-(deoxyribonucleotide)m = (deoxyribonucleotide)n+m + AMP + beta-nicotinamide D-nucleotide.. DNA ligase that catalyzes the formation of phosphodiester linkages between 5'-phosphoryl and 3'-hydroxyl groups in double-stranded DNA using NAD as a coenzyme and as the energy source for the reaction. It is essential for DNA replication and repair of damaged DNA. The chain is DNA ligase from Coxiella burnetii (strain CbuG_Q212) (Coxiella burnetii (strain Q212)).